The sequence spans 83 residues: Exodeoxyribonuclease 7 small subunit (83 aa).

This sequence belongs to the XseB family. Heterooligomer composed of large and small subunits.

The protein localises to the cytoplasm. The enzyme catalyses Exonucleolytic cleavage in either 5'- to 3'- or 3'- to 5'-direction to yield nucleoside 5'-phosphates.. Its function is as follows. Bidirectionally degrades single-stranded DNA into large acid-insoluble oligonucleotides, which are then degraded further into small acid-soluble oligonucleotides. In Bradyrhizobium sp. (strain BTAi1 / ATCC BAA-1182), this protein is Exodeoxyribonuclease 7 small subunit.